A 435-amino-acid chain; its full sequence is NAD-specific glutamate dehydrogenase A (435 aa).

The interval 1–28 is disordered; the sequence is MTMASKSDSTHDESGDEAADSTEPESAL. A compositionally biased stretch (acidic residues) spans 14 to 23; that stretch reads SGDEAADSTE. The active site involves Lys126.

This sequence belongs to the Glu/Leu/Phe/Val dehydrogenases family. Homohexamer. The N-terminus is blocked.

The catalysed reaction is L-glutamate + NAD(+) + H2O = 2-oxoglutarate + NH4(+) + NADH + H(+). Inhibited by ethanol, acetone, acetonitrile and 2-propanol (65 to 70% inhibition) and to a lesser extent by methanol and dimethyl formamide (26 and 49 % inhibition respectively). No effect of glycerol or DMSO. The polypeptide is NAD-specific glutamate dehydrogenase A (gdhX) (Halobacterium salinarum (Halobacterium halobium)).